Reading from the N-terminus, the 145-residue chain is Putative pre-16S rRNA nuclease (145 aa).

The protein belongs to the YqgF nuclease family.

It localises to the cytoplasm. In terms of biological role, could be a nuclease involved in processing of the 5'-end of pre-16S rRNA. This chain is Putative pre-16S rRNA nuclease, found in Pseudomonas fluorescens (strain ATCC BAA-477 / NRRL B-23932 / Pf-5).